The sequence spans 291 residues: Homoserine kinase (291 aa).

80–90 (RPSSGLGSSAA) lines the ATP pocket.

This sequence belongs to the GHMP kinase family. Homoserine kinase subfamily.

It localises to the cytoplasm. The enzyme catalyses L-homoserine + ATP = O-phospho-L-homoserine + ADP + H(+). The protein operates within amino-acid biosynthesis; L-threonine biosynthesis; L-threonine from L-aspartate: step 4/5. Functionally, catalyzes the ATP-dependent phosphorylation of L-homoserine to L-homoserine phosphate. This chain is Homoserine kinase, found in Haloquadratum walsbyi (strain DSM 16790 / HBSQ001).